The following is a 416-amino-acid chain: Gamma-glutamyl phosphate reductase (416 aa).

It belongs to the gamma-glutamyl phosphate reductase family.

It is found in the cytoplasm. The enzyme catalyses L-glutamate 5-semialdehyde + phosphate + NADP(+) = L-glutamyl 5-phosphate + NADPH + H(+). It functions in the pathway amino-acid biosynthesis; L-proline biosynthesis; L-glutamate 5-semialdehyde from L-glutamate: step 2/2. In terms of biological role, catalyzes the NADPH-dependent reduction of L-glutamate 5-phosphate into L-glutamate 5-semialdehyde and phosphate. The product spontaneously undergoes cyclization to form 1-pyrroline-5-carboxylate. This Streptococcus pyogenes serotype M3 (strain ATCC BAA-595 / MGAS315) protein is Gamma-glutamyl phosphate reductase.